Here is a 269-residue protein sequence, read N- to C-terminus: NAD kinase (269 aa).

Catalysis depends on aspartate 45, which acts as the Proton acceptor. Residues 45 to 46 (DG), 122 to 123 (NE), arginine 149, aspartate 151, and alanine 186 each bind NAD(+).

Belongs to the NAD kinase family. A divalent metal cation serves as cofactor.

Its subcellular location is the cytoplasm. It catalyses the reaction NAD(+) + ATP = ADP + NADP(+) + H(+). Functionally, involved in the regulation of the intracellular balance of NAD and NADP, and is a key enzyme in the biosynthesis of NADP. Catalyzes specifically the phosphorylation on 2'-hydroxyl of the adenosine moiety of NAD to yield NADP. This is NAD kinase from Staphylococcus haemolyticus (strain JCSC1435).